A 291-amino-acid chain; its full sequence is DNA repair protein RecO (291 aa).

The protein belongs to the RecO family.

Its function is as follows. Involved in DNA repair and RecF pathway recombination. The polypeptide is DNA repair protein RecO (Cupriavidus pinatubonensis (strain JMP 134 / LMG 1197) (Cupriavidus necator (strain JMP 134))).